Reading from the N-terminus, the 398-residue chain is Tear acid lipase-like protein (398 aa).

A signal peptide spans 1–19 (MSWLLSTMCLVHVCGNIFC). Catalysis depends on serine 170, which acts as the Nucleophile. An intrachain disulfide couples cysteine 243 to cysteine 252. Asparagine 268 carries an N-linked (GlcNAc...) asparagine glycan. Active-site charge relay system residues include aspartate 340 and histidine 369.

This sequence belongs to the AB hydrolase superfamily. Lipase family. In terms of assembly, monomer. Post-translationally, N-glycosylated. Expressed in female lacrimal gland acinar cells from where it is secreted into tears (at protein level).

It localises to the secreted. Functionally, female-specific protein which lacks detectable lipase activity against a range of substrates. Binds the hydrophobic lipid 1-aminoanthracene with high affinity. The chain is Tear acid lipase-like protein from Mesocricetus auratus (Golden hamster).